A 365-amino-acid polypeptide reads, in one-letter code: Peptide chain release factor 2 (365 aa).

Residue Q252 is modified to N5-methylglutamine.

It belongs to the prokaryotic/mitochondrial release factor family. Methylated by PrmC. Methylation increases the termination efficiency of RF2.

It is found in the cytoplasm. In terms of biological role, peptide chain release factor 2 directs the termination of translation in response to the peptide chain termination codons UGA and UAA. The protein is Peptide chain release factor 2 of Klebsiella pneumoniae (strain 342).